The primary structure comprises 188 residues: dCTP deaminase (188 aa).

107 to 112 (KSTYAR) serves as a coordination point for dCTP. The Proton donor/acceptor role is filled by Glu133. DCTP contacts are provided by Gln152, Tyr166, and Gln176.

Belongs to the dCTP deaminase family. Homotrimer.

The catalysed reaction is dCTP + H2O + H(+) = dUTP + NH4(+). It functions in the pathway pyrimidine metabolism; dUMP biosynthesis; dUMP from dCTP (dUTP route): step 1/2. Its function is as follows. Catalyzes the deamination of dCTP to dUTP. The chain is dCTP deaminase from Sulfurovum sp. (strain NBC37-1).